We begin with the raw amino-acid sequence, 889 residues long: DNA mismatch repair protein MutS (889 aa).

Residue 641–648 (GPNMAGKS) participates in ATP binding.

Belongs to the DNA mismatch repair MutS family.

Its function is as follows. This protein is involved in the repair of mismatches in DNA. It is possible that it carries out the mismatch recognition step. This protein has a weak ATPase activity. This chain is DNA mismatch repair protein MutS, found in Orientia tsutsugamushi (strain Boryong) (Rickettsia tsutsugamushi).